We begin with the raw amino-acid sequence, 117 residues long: Eukaryotic translation initiation factor 4E-binding protein 1 (117 aa).

2 stretches are compositionally biased toward polar residues: residues 1 to 12 (MSAGSSCSQTPS) and 33 to 47 (YSTTPGGTLFSTTPG). The tract at residues 1–47 (MSAGSSCSQTPSRAIPTRRVALGDGVQLPPGDYSTTPGGTLFSTTPG) is disordered. An N-acetylserine modification is found at Ser-2. Phosphothreonine is present on residues Thr-36 and Thr-40. Position 43 is a phosphoserine (Ser-43). Phosphothreonine is present on residues Thr-45 and Thr-49. Tyr-53 is modified (phosphotyrosine). The short motif at 53–59 (YDRKFLM) is the YXXXXLphi motif element. Lys-56 is covalently cross-linked (Glycyl lysine isopeptide (Lys-Gly) (interchain with G-Cter in ubiquitin)). At Ser-64 the chain carries Phosphoserine. Residues 64–117 (SPVAKTPPKDLPAIPGVTSPTSDEPPMQASQSQLPSSPEDKRAGGEESQFEMDI) form a disordered region. Thr-69 bears the Phosphothreonine mark. Polar residues predominate over residues 81 to 99 (TSPTSDEPPMQASQSQLPS). Phosphoserine is present on residues Ser-82, Ser-95, Ser-99, Ser-100, and Ser-111. Positions 113-117 (FEMDI) match the TOS motif motif.

Belongs to the eIF4E-binding protein family. Hypophosphorylated EIF4EBP1 competes with EIF4G1/EIF4G3 to interact with EIF4E; insulin stimulated MAP-kinase (MAPK1 and MAPK3) or mTORC1 phosphorylation of EIF4EBP1 causes dissociation of the complex allowing EIF4G1/EIF4G3 to bind and consequent initiation of translation. Interacts (via TOS motif) with RPTOR; promoting phosphorylation by mTORC1. Phosphorylated on serine and threonine residues in response to insulin, EGF and PDGF. Phosphorylation at Thr-36, Thr-45, Ser-64 and Thr-69, corresponding to the hyperphosphorylated form, is regulated by mTORC1 and abolishes binding to EIF4E. In terms of processing, ubiquitinated: when eIF4E levels are low, hypophosphorylated form is ubiquitinated by the BCR(KLHL25) complex, leading to its degradation and serving as a homeostatic mechanism to maintain translation and prevent eIF4E inhibition when eIF4E levels are low. Not ubiquitinated when hyperphosphorylated (at Thr-36, Thr-45, Ser-64 and Thr-69) or associated with eIF4E. As to expression, highest expression in fat cells.

It is found in the cytoplasm. Its subcellular location is the nucleus. In terms of biological role, repressor of translation initiation that regulates EIF4E activity by preventing its assembly into the eIF4F complex: hypophosphorylated form competes with EIF4G1/EIF4G3 and strongly binds to EIF4E, leading to repress translation. In contrast, hyperphosphorylated form dissociates from EIF4E, allowing interaction between EIF4G1/EIF4G3 and EIF4E, leading to initiation of translation. Mediates the regulation of protein translation by hormones, growth factors and other stimuli that signal through the MAP kinase and mTORC1 pathways. This Mus musculus (Mouse) protein is Eukaryotic translation initiation factor 4E-binding protein 1 (Eif4ebp1).